We begin with the raw amino-acid sequence, 271 residues long: Protein-L-isoaspartate O-methyltransferase (271 aa).

The span at 1–15 (MRKPVTPPGNPPRPR) shows a compositional bias: pro residues. Residues 1 to 60 (MRKPVTPPGNPPRPRSPGYGSTSLAPGITAANSNTRISPPTLARPAPAAGAGGQGGNLGL) form a disordered region. Residues 39 to 49 (PPTLARPAPAA) are compositionally biased toward low complexity. S119 is an active-site residue.

The protein belongs to the methyltransferase superfamily. L-isoaspartyl/D-aspartyl protein methyltransferase family.

The protein localises to the cytoplasm. The enzyme catalyses [protein]-L-isoaspartate + S-adenosyl-L-methionine = [protein]-L-isoaspartate alpha-methyl ester + S-adenosyl-L-homocysteine. In terms of biological role, catalyzes the methyl esterification of L-isoaspartyl residues in peptides and proteins that result from spontaneous decomposition of normal L-aspartyl and L-asparaginyl residues. It plays a role in the repair and/or degradation of damaged proteins. This chain is Protein-L-isoaspartate O-methyltransferase, found in Bordetella petrii (strain ATCC BAA-461 / DSM 12804 / CCUG 43448).